Reading from the N-terminus, the 81-residue chain is Gamma-conotoxin-like TxMEKL-0511 (81 aa).

An N-terminal signal peptide occupies residues 1-19 (MEKLTILLLVAAVLLSIQA). Positions 20–45 (LNQEKHQRAKINLLSKRKPPAERWWR) are excised as a propeptide. 3 disulfide bridges follow: C49/C63, C56/C67, and C62/C72.

It belongs to the conotoxin O2 superfamily. Expressed by the venom duct.

It is found in the secreted. In terms of biological role, gamma-conotoxins may act on voltage-gated non-specific cation pacemaker channels (HCN). In Conus textile (Cloth-of-gold cone), this protein is Gamma-conotoxin-like TxMEKL-0511.